We begin with the raw amino-acid sequence, 125 residues long: Small ribosomal subunit protein uS12c (125 aa).

The segment at 104 to 125 (ASGVKDRKQGRSKYGGKRPKGD) is disordered. Residues 113 to 125 (GRSKYGGKRPKGD) are compositionally biased toward basic residues.

Belongs to the universal ribosomal protein uS12 family. In terms of assembly, part of the 30S ribosomal subunit.

The protein localises to the plastid. Its subcellular location is the chloroplast. In terms of biological role, with S4 and S5 plays an important role in translational accuracy. Located at the interface of the 30S and 50S subunits. This Emiliania huxleyi (Coccolithophore) protein is Small ribosomal subunit protein uS12c (rps12).